The following is a 450-amino-acid chain: Phosphoglucosamine mutase (450 aa).

Ser101 (phosphoserine intermediate) is an active-site residue. Mg(2+)-binding residues include Ser101, Asp240, Asp242, and Asp244. A Phosphoserine modification is found at Ser101.

This sequence belongs to the phosphohexose mutase family. Mg(2+) is required as a cofactor. In terms of processing, activated by phosphorylation.

The catalysed reaction is alpha-D-glucosamine 1-phosphate = D-glucosamine 6-phosphate. Functionally, catalyzes the conversion of glucosamine-6-phosphate to glucosamine-1-phosphate. This is Phosphoglucosamine mutase from Streptococcus equi subsp. equi (strain 4047).